A 265-amino-acid chain; its full sequence is 3'(2'),5'-bisphosphate nucleotidase CysQ (265 aa).

The Mg(2+) site is built by Glu80, Asp99, Leu101, Asp102, and Asp222. A substrate-binding site is contributed by Glu80. Substrate-binding positions include 101 to 104 and Asp222; that span reads LDGT.

Belongs to the inositol monophosphatase superfamily. CysQ family. Mg(2+) serves as cofactor.

The protein localises to the cell inner membrane. The enzyme catalyses adenosine 3',5'-bisphosphate + H2O = AMP + phosphate. Its function is as follows. Converts adenosine-3',5'-bisphosphate (PAP) to AMP. In Buchnera aphidicola subsp. Acyrthosiphon pisum (strain APS) (Acyrthosiphon pisum symbiotic bacterium), this protein is 3'(2'),5'-bisphosphate nucleotidase CysQ.